The chain runs to 192 residues: Leucine-rich repeat-containing protein 51 (192 aa).

LRR repeat units lie at residues 49-71 (SLTQ…NQVA), 80-101 (NLAW…LTTF), and 103-124 (NLSV…NKLA). An LRRCT domain is found at 137–175 (NPMEEEKGYRQYVLCTLSRITTFDFSGVTKADRTTAEVW).

It localises to the cytoplasm. The polypeptide is Leucine-rich repeat-containing protein 51 (Homo sapiens (Human)).